Consider the following 354-residue polypeptide: Uroporphyrinogen decarboxylase (354 aa).

Substrate-binding positions include 27-31, Asp-77, Tyr-154, Thr-209, and His-327; that span reads RQAGR.

It belongs to the uroporphyrinogen decarboxylase family. In terms of assembly, homodimer.

The protein resides in the cytoplasm. The catalysed reaction is uroporphyrinogen III + 4 H(+) = coproporphyrinogen III + 4 CO2. It functions in the pathway porphyrin-containing compound metabolism; protoporphyrin-IX biosynthesis; coproporphyrinogen-III from 5-aminolevulinate: step 4/4. Functionally, catalyzes the decarboxylation of four acetate groups of uroporphyrinogen-III to yield coproporphyrinogen-III. This chain is Uroporphyrinogen decarboxylase, found in Salmonella dublin (strain CT_02021853).